Consider the following 266-residue polypeptide: Phosphatidylglycerol--prolipoprotein diacylglyceryl transferase (266 aa).

A run of 4 helical transmembrane segments spans residues 14–34, 55–75, 91–111, and 117–137; these read FGPLQIHWYGLMYLAGFAFFW, FLFYGALGVILGGRIGYILFY, WKGGMAFHGGLIGVMVAMWLF, and VSMFVVADFVAPMVPVGLFFG. R138 is a binding site for a 1,2-diacyl-sn-glycero-3-phospho-(1'-sn-glycerol). 3 helical membrane-spanning segments follow: residues 172–192, 201–221, and 235–255; these read YPTQLLEALLEGIVLFIILMF, GAASGLFIGLYGLFRFYVEFF, and WVTMGQLLSLPMILIGFALVV.

It belongs to the Lgt family.

The protein resides in the cell inner membrane. It carries out the reaction L-cysteinyl-[prolipoprotein] + a 1,2-diacyl-sn-glycero-3-phospho-(1'-sn-glycerol) = an S-1,2-diacyl-sn-glyceryl-L-cysteinyl-[prolipoprotein] + sn-glycerol 1-phosphate + H(+). It participates in protein modification; lipoprotein biosynthesis (diacylglyceryl transfer). Catalyzes the transfer of the diacylglyceryl group from phosphatidylglycerol to the sulfhydryl group of the N-terminal cysteine of a prolipoprotein, the first step in the formation of mature lipoproteins. This is Phosphatidylglycerol--prolipoprotein diacylglyceryl transferase from Hydrogenovibrio crunogenus (strain DSM 25203 / XCL-2) (Thiomicrospira crunogena).